Here is a 1662-residue protein sequence, read N- to C-terminus: Cortactin-binding protein 2 (1662 aa).

Disordered regions lie at residues 1-23 (MATDGASCEPDLSRAPEDAAGAA), 202-235 (KKKTNELEEELSAEKRRSSEMEAQMEKQLSEFDT), 365-439 (IGVS…LHPG), and 453-477 (GNANDPDQNGNTTQSPPSRDVSPTS). Residues 118 to 275 (RKMQERMSAQ…EQLKRGSDSK (158 aa)) adopt a coiled-coil conformation. Residues 385–395 (PSTGSTPDPTS) are compositionally biased toward low complexity. A compositionally biased stretch (polar residues) spans 404–421 (AAPSTAQTPGITPQNSQA). The residue at position 497 (Arg497) is an Asymmetric dimethylarginine. Residues 498 to 615 (FTGPQAGAPP…SSPQLPPKPS (118 aa)) form a disordered region. Polar residues-rich tracts occupy residues 516–529 (DVSTHPSVGRTSVK) and 582–592 (TVASPPSSLPQ). ANK repeat units follow at residues 708–738 (GRPTLLQQAAAQGNVTLLSMLLNEEGLDINY), 742–771 (DGHSALYSAAKNGHTDCVRLLLSAEAQVNA), 775–804 (NGFTPLCAAAAQGHFECVELLIAYDANINH), 808–837 (GGQTPLYLACKNGNKECIRLLLEAGTDRSV), and 841–870 (DGWTPVHAAVDTGNVDSLKLLMYHRVPAHG). Residues 871–897 (NSFSEEESESGVFDLDEGEESPEGKSK) form a disordered region. The span at 874 to 891 (SEEESESGVFDLDEGEES) shows a compositional bias: acidic residues. One copy of the ANK 6 repeat lies at 911–941 (EGWTAAHIAASKGFKNCLEILCRHGGLETER). The interval 1446-1473 (KKKGESGAWRKVNTSPRRKSGRFSLPTW) is disordered. Ser1523 carries the post-translational modification Phosphoserine. The tract at residues 1614–1662 (VPRSKVTQCSQNTKRSSSSSNTRQIEINNNSKEENWNLHKNEHLEKPNK) is disordered. The span at 1623–1637 (SQNTKRSSSSSNTRQ) shows a compositional bias: low complexity. A compositionally biased stretch (basic and acidic residues) spans 1644 to 1662 (SKEENWNLHKNEHLEKPNK).

Interacts with CTTN/cortactin SH3 domain. Interacts with STRN, STRN4/zinedin and MOB4/phocein; this interactions mediate the association with the STRIPAK core complex and may regulate dendritic spine distribution of the STRIPAK complex in hippocampal neurons. Activation of glutamate receptors weakens the interaction with STRN and STRN4.

It localises to the cytoplasm. It is found in the cell cortex. Its subcellular location is the cell projection. The protein localises to the dendritic spine. Regulates the dendritic spine distribution of CTTN/cortactin in hippocampal neurons, and thus controls dendritic spinogenesis and dendritic spine maintenance. Associates with the striatin-interacting phosphatase and kinase (STRIPAK) core complex to regulate dendritic spine distribution of the STRIPAK complex in hippocampal neurons. This chain is Cortactin-binding protein 2 (CTTNBP2), found in Callithrix jacchus (White-tufted-ear marmoset).